The chain runs to 311 residues: tRNA-cytidine(32) 2-sulfurtransferase (311 aa).

A PP-loop motif motif is present at residues 47–52; it reads SGGKDS. Residues Cys122, Cys125, and Cys213 each coordinate [4Fe-4S] cluster.

Belongs to the TtcA family. As to quaternary structure, homodimer. The cofactor is Mg(2+). [4Fe-4S] cluster serves as cofactor.

Its subcellular location is the cytoplasm. The catalysed reaction is cytidine(32) in tRNA + S-sulfanyl-L-cysteinyl-[cysteine desulfurase] + AH2 + ATP = 2-thiocytidine(32) in tRNA + L-cysteinyl-[cysteine desulfurase] + A + AMP + diphosphate + H(+). It participates in tRNA modification. Its function is as follows. Catalyzes the ATP-dependent 2-thiolation of cytidine in position 32 of tRNA, to form 2-thiocytidine (s(2)C32). The sulfur atoms are provided by the cysteine/cysteine desulfurase (IscS) system. This Escherichia coli O81 (strain ED1a) protein is tRNA-cytidine(32) 2-sulfurtransferase.